Here is a 370-residue protein sequence, read N- to C-terminus: Chaperone protein DnaJ (370 aa).

The J domain occupies 4-68; sequence DYYQVLGVSK…QKRAAYDRFG (65 aa). The segment at 133-211 adopts a CR-type zinc-finger fold; that stretch reads GIEKNISFSS…CHGMGRYHKQ (79 aa). The Zn(2+) site is built by cysteine 146, cysteine 149, cysteine 163, cysteine 166, cysteine 185, cysteine 188, cysteine 199, and cysteine 202. 4 CXXCXGXG motif repeats span residues 146 to 153, 163 to 170, 185 to 192, and 199 to 206; these read CDTCHGTG, CDACGGVG, CHKCQGNG, and CKKCHGMG.

Belongs to the DnaJ family. As to quaternary structure, homodimer. Zn(2+) is required as a cofactor.

It localises to the cytoplasm. Participates actively in the response to hyperosmotic and heat shock by preventing the aggregation of stress-denatured proteins and by disaggregating proteins, also in an autonomous, DnaK-independent fashion. Unfolded proteins bind initially to DnaJ; upon interaction with the DnaJ-bound protein, DnaK hydrolyzes its bound ATP, resulting in the formation of a stable complex. GrpE releases ADP from DnaK; ATP binding to DnaK triggers the release of the substrate protein, thus completing the reaction cycle. Several rounds of ATP-dependent interactions between DnaJ, DnaK and GrpE are required for fully efficient folding. Also involved, together with DnaK and GrpE, in the DNA replication of plasmids through activation of initiation proteins. This Rickettsia prowazekii (strain Madrid E) protein is Chaperone protein DnaJ.